A 915-amino-acid chain; its full sequence is Alpha-xylosidase 1 (915 aa).

The first 27 residues, 1-27 (MASSSSSLAFSLSLLLALILCFSPTQS), serve as a signal peptide directing secretion. N-linked (GlcNAc...) asparagine glycans are attached at residues Asn153, Asn304, and Asn375. Catalysis depends on residues Asp440 and Glu443. 2 N-linked (GlcNAc...) asparagine glycosylation sites follow: Asn476 and Asn490. The Proton donor role is filled by Asp563. N-linked (GlcNAc...) asparagine glycans are attached at residues Asn819, Asn888, and Asn907.

The protein belongs to the glycosyl hydrolase 31 family. Expressed in roots, stems, leaves, flowers and siliques. Expressed in cell types undergoing cell wall modifications, including trichomes, vasculature, stomata, and elongating anther filaments. Not detected in pollen.

Its subcellular location is the secreted. It localises to the cell wall. The protein localises to the extracellular space. The protein resides in the apoplast. The enzyme catalyses Hydrolysis of terminal, non-reducing alpha-D-xylose residues with release of alpha-D-xylose.. Functionally, glycoside hydrolase releasing xylosyl residues from xyloglucan oligosaccharides at the non-reducing end. Has alpha-xylosidase activity against xylan oligosaccharides. Also has alpha-glucosidase activity against p-nitrophenyl-alpha-D-glucopyranoside. No activity against p-nitrophenyl-D-xyloside. The protein is Alpha-xylosidase 1 of Arabidopsis thaliana (Mouse-ear cress).